The sequence spans 971 residues: uncharacterized protein (971 aa).

The signal sequence occupies residues 1 to 24 (MQSNLLKVLGVLAIVATLVCFIFA). A disordered region spans residues 127 to 146 (RTRPGKSNLDDSGQMIPIPR). Transmembrane regions (helical) follow at residues 611–631 (IKAILILYVMTYGAMFLLGFA), 721–741 (LGLSGIIYFIITFIAICIVII), 753–773 (AFMATCILIGIAPLFISFLLF), 795–815 (VVMMAGIIVLTQLFTIYLDFV), 832–852 (FIGTILPIALLNVPIFCINWF), and 865–885 (GVNMQNIVALVIIAYGMYGYV). Residues 933–971 (TGRAKSRLEQRNRTLEHAEQNSKKYKKRIGENTNEETLK) are disordered. Residues 938-954 (SRLEQRNRTLEHAEQNS) are compositionally biased toward basic and acidic residues.

It belongs to the TrbL/VirB6 family.

Its subcellular location is the cell membrane. This is an uncharacterized protein from Rickettsia prowazekii (strain Madrid E).